We begin with the raw amino-acid sequence, 1732 residues long: Serine/threonine-protein kinase MRCK alpha (1732 aa).

The region spanning 77-343 is the Protein kinase domain; sequence FEILKVIGRG…IEDFKKHPFF (267 aa). Residues 83 to 91 and lysine 106 contribute to the ATP site; that span reads IGRGAFGEV. Catalysis depends on aspartate 201, which acts as the Proton acceptor. Serine 222 and serine 234 each carry phosphoserine; by autocatalysis. Threonine 240 is subject to Phosphothreonine; by autocatalysis. The region spanning 344 to 414 is the AGC-kinase C-terminal domain; sequence SGIDWDNIRN…TSSCVLSDRS (71 aa). Coiled-coil stretches lie at residues 437–820 and 880–943; these read NNLA…WEAQ and LELQ…SEKG. Residues 968–1003 are disordered; it reads ERSPSCTPASKGRRTVDSTPLSVHTPTLRKKGCPGS. The Phorbol-ester/DAG-type zinc finger occupies 1012–1062; the sequence is THQFFVKSFTTPTKCHQCTSLMVGLIRQGCSCEVCGFSCHITCVNKAPTTC. In terms of domain architecture, PH spans 1082–1201; it reads GTAYEGHVRI…WVGVLSELHK (120 aa). At serine 1127 the chain carries Phosphoserine. The CNH domain maps to 1227–1499; the sequence is IKTTQAAAII…RPLNNEGSLN (273 aa). Serine 1545 carries the phosphoserine modification. Residues 1571–1584 enclose the CRIB domain; sequence ISNPTNFNHIAHMG. The tract at residues 1591 to 1732 is disordered; sequence ILKDLPMNPR…ESTDRGSWDP (142 aa). Residues 1604 to 1619 show a composition bias toward polar residues; the sequence is SRTVFSGSVSIPSITK. Serine 1611, serine 1613, serine 1629, serine 1651, serine 1664, serine 1669, and serine 1693 each carry phosphoserine. Residues 1625–1640 are compositionally biased toward low complexity; sequence GRSMSASSGLSARSSA. Residues 1665 to 1674 are compositionally biased toward low complexity; sequence PSEGSLSSGG. The span at 1697–1707 shows a compositional bias: low complexity; the sequence is STASNSSNLSS. Serine 1719 and serine 1721 each carry phosphoserine.

It belongs to the protein kinase superfamily. AGC Ser/Thr protein kinase family. DMPK subfamily. As to quaternary structure, homodimer and homotetramer via the coiled coil regions. Interacts tightly with GTP-bound but not GDP-bound CDC42. Forms a tripartite complex with MYO18A and LURAP1 with the latter acting as an adapter connecting CDC42BPA and MYO18A. LURAP1 binding results in activation of CDC42BPA by abolition of its negative autoregulation. Interacts with LURAP1. Interacts (via AGC-kinase C-terminal domain) with FAM89B/LRAP25 (via LRR repeat). Forms a tripartite complex with FAM89B/LRAP25 and LIMK1. It depends on Mg(2+) as a cofactor. Proteolytically cleaved by caspases upon apoptosis induction. The cleavage at Asp-478 by CASP3 increases its kinase activity (in vitro). As to expression, abundant in the heart, brain, skeletal muscle, kidney, and pancreas, with little or no expression in the lung and liver.

It localises to the cytoplasm. The protein localises to the cell projection. It is found in the lamellipodium. The catalysed reaction is L-seryl-[protein] + ATP = O-phospho-L-seryl-[protein] + ADP + H(+). It carries out the reaction L-threonyl-[protein] + ATP = O-phospho-L-threonyl-[protein] + ADP + H(+). Its activity is regulated as follows. Maintained in an inactive, closed conformation by an interaction between the kinase domain and the negative autoregulatory C-terminal coiled-coil region. Agonist binding to the phorbol ester binding site disrupts this, releasing the kinase domain to allow N-terminus-mediated dimerization and kinase activation by transautophosphorylation. Inhibited by chelerythrine chloride. In terms of biological role, serine/threonine-protein kinase which is an important downstream effector of CDC42 and plays a role in the regulation of cytoskeleton reorganization and cell migration. Regulates actin cytoskeletal reorganization via phosphorylation of PPP1R12C and MYL9/MLC2. In concert with MYO18A and LURAP1, is involved in modulating lamellar actomyosin retrograde flow that is crucial to cell protrusion and migration. Phosphorylates: PPP1R12A, LIMK1 and LIMK2. May play a role in TFRC-mediated iron uptake. In concert with FAM89B/LRAP25 mediates the targeting of LIMK1 to the lamellipodium resulting in its activation and subsequent phosphorylation of CFL1 which is important for lamellipodial F-actin regulation. Triggers the formation of an extrusion apical actin ring required for epithelial extrusion of apoptotic cells. This is Serine/threonine-protein kinase MRCK alpha from Homo sapiens (Human).